The primary structure comprises 236 residues: UPF0502 protein Bpro_3844 (236 aa).

It belongs to the UPF0502 family.

This Polaromonas sp. (strain JS666 / ATCC BAA-500) protein is UPF0502 protein Bpro_3844.